The chain runs to 293 residues: 4-hydroxy-tetrahydrodipicolinate synthase (293 aa).

Pyruvate is bound at residue threonine 47. The active-site Proton donor/acceptor is tyrosine 135. The Schiff-base intermediate with substrate role is filled by lysine 164. Residue isoleucine 205 coordinates pyruvate.

Belongs to the DapA family. In terms of assembly, homotetramer; dimer of dimers.

Its subcellular location is the cytoplasm. The enzyme catalyses L-aspartate 4-semialdehyde + pyruvate = (2S,4S)-4-hydroxy-2,3,4,5-tetrahydrodipicolinate + H2O + H(+). The protein operates within amino-acid biosynthesis; L-lysine biosynthesis via DAP pathway; (S)-tetrahydrodipicolinate from L-aspartate: step 3/4. Functionally, catalyzes the condensation of (S)-aspartate-beta-semialdehyde [(S)-ASA] and pyruvate to 4-hydroxy-tetrahydrodipicolinate (HTPA). This chain is 4-hydroxy-tetrahydrodipicolinate synthase, found in Symbiobacterium thermophilum (strain DSM 24528 / JCM 14929 / IAM 14863 / T).